The chain runs to 374 residues: MATPDGEQVWAQLQPQDRAWLNDLSRRAGPDTELALVGGAVRDALLGQTPLDLDIVVAGQDGQGVEALALASGLPFVFHPAFENATLTLPDGRGADLVRARREHYPQPGRNPEPLPGTLHDDLRRRDFGLNALALRLREDGAPELLDVVGGLRDLERRELRPLHDRSLHEDASRLVRAARLAARLELHPAPELLAQVPDALALADDTPRLWAELKLLLAEPRPGQAARVLDGWGAGTLLPGLPLLEALDVQQNAGTPVQPGTYAAAVLSAAPDAAALAERMALGERPAALLARALSDSYFAPGTPELQLRGLLRPESYLPLTGREVVALGVAPGPAVGRALAHLAGLRQSGAVRSADEERTALRAYLGANPKAT.

39 to 42 (GAVR) serves as a coordination point for CTP. 2 residues coordinate Mg(2+): Asp52 and Asp54. Residues 126-127 (RD), Asn131, 171-180 (DASRLVRAAR), and Arg209 each bind CTP.

Belongs to the tRNA nucleotidyltransferase/poly(A) polymerase family. Mg(2+) serves as cofactor.

It carries out the reaction a tRNA precursor + 2 CTP = a tRNA with a 3' CC end + 2 diphosphate. TRNA nucleotidyltransferase involved in the synthesis of the tRNA CCA terminus. Adds the two cytidine residues to tRNA. The sequence is that of CC-adding tRNA nucleotidyltransferase from Deinococcus radiodurans (strain ATCC 13939 / DSM 20539 / JCM 16871 / CCUG 27074 / LMG 4051 / NBRC 15346 / NCIMB 9279 / VKM B-1422 / R1).